A 35-amino-acid polypeptide reads, in one-letter code: Purotoxin-1 (35 aa).

Cystine bridges form between C3–C16, C10–C21, C15–C32, and C23–C30.

It belongs to the neurotoxin 33 family. In terms of tissue distribution, expressed by the venom gland.

The protein resides in the secreted. Inhibits P2RX3 receptors. Has an analgesic effect in rat. Enhances the high-affinity desensitization of P2RX3 purinoceptors. At 50 nM, decreases the IC(50) for ambient ATP from 46.5 nM to 12.7 nM in mouse P2RX3. In Alopecosa marikovskyi (Wolf spider), this protein is Purotoxin-1.